Here is a 264-residue protein sequence, read N- to C-terminus: Interleukin-33 (264 aa).

The segment at 1 to 67 is homeodomain-like HTH domain; sequence MRPRMKYSNS…ETCYFGKEPA (67 aa). The propeptide occupies 1–101; sequence MRPRMKYSNS…RSLLGSIQAF (101 aa). An interaction with RELA region spans residues 66–108; that stretch reads PAKRYSLKSGSKHEGRLSTCLPDSRKRSLLGSIQAFAASVDTL.

The protein belongs to the IL-1 family. Highly divergent. As to quaternary structure, forms a 1:1:1 heterotrimeric complex with its primary high-affinity receptor IL1RL1 and the coreceptor IL1RAP. Interacts with cargo receptor TMED10; the interaction mediates the translocation from the cytoplasm into the ERGIC (endoplasmic reticulum-Golgi intermediate compartment) and thereby secretion. The full-length protein can be released from cells and is able to signal via the IL1RL1/ST2 receptor. However, proteolytic processing by CELA1, CSTG/cathepsin G and ELANE/neutrophil elastase produces C-terminal peptides that are more active than the unprocessed full-length protein. May also be proteolytically processed by calpains. Proteolytic cleavage mediated by apoptotic caspases including CASP3 and CASP7 results in IL33 inactivation. In vitro proteolytic cleavage by CASP1 was reported but could not be confirmed in vivo suggesting that IL33 is probably not a direct substrate for that caspase.

The protein localises to the nucleus. Its subcellular location is the chromosome. The protein resides in the cytoplasm. It is found in the cytoplasmic vesicle. It localises to the secretory vesicle. The protein localises to the secreted. Its function is as follows. Cytokine that binds to and signals through the IL1RL1/ST2 receptor which in turn activates NF-kappa-B and MAPK signaling pathways in target cells. Involved in the maturation of Th2 cells inducing the secretion of T-helper type 2-associated cytokines. Also involved in activation of mast cells, basophils, eosinophils and natural killer cells. Acts as a chemoattractant for Th2 cells, and may function as an 'alarmin', that amplifies immune responses during tissue injury. Induces rapid UCP2-dependent mitochondrial rewiring that attenuates the generation of reactive oxygen species and preserves the integrity of Krebs cycle required for persistent production of itaconate and subsequent GATA3-dependent differentiation of inflammation-resolving alternatively activated macrophages. In terms of biological role, in quiescent endothelia the uncleaved form is constitutively and abundantly expressed, and acts as a chromatin-associated nuclear factor with transcriptional repressor properties, it may sequester nuclear NF-kappaB/RELA, lowering expression of its targets. This form is rapidely lost upon angiogenic or pro-inflammatory activation. The chain is Interleukin-33 from Rattus norvegicus (Rat).